The sequence spans 194 residues: Dof zinc finger protein DOF4.2 (194 aa).

A Dof-type zinc finger spans residues 21-75; sequence RVCPRCYSDQTRFSYFNNNKKSQPRYKCKNCCRCWTHGGVLRNIPVTGICDKSNL. C23, C26, C48, and C51 together coordinate Zn(2+).

Its subcellular location is the nucleus. Transcription factor that binds specifically to a 5'-AA[AG]G-3' consensus core sequence. This is Dof zinc finger protein DOF4.2 (DOF4.2) from Arabidopsis thaliana (Mouse-ear cress).